The sequence spans 106 residues: uORF protein (106 aa).

Over residues 1–19 (MDLETRVSGHEKPQRRNPE) the composition is skewed to basic and acidic residues. The segment at 1–31 (MDLETRVSGHEKPQRRNPEDPDCQYAKTRSS) is disordered.

Its subcellular location is the host cytoplasm. It localises to the host cytoskeleton. Plays a role in viral replication. In Zika virus (ZIKV), this protein is uORF protein.